Reading from the N-terminus, the 425-residue chain is 3-isopropylmalate dehydratase large subunit (425 aa).

Cysteine 305, cysteine 365, and cysteine 368 together coordinate [4Fe-4S] cluster.

The protein belongs to the aconitase/IPM isomerase family. LeuC type 2 subfamily. In terms of assembly, heterodimer of LeuC and LeuD. Requires [4Fe-4S] cluster as cofactor.

It catalyses the reaction (2R,3S)-3-isopropylmalate = (2S)-2-isopropylmalate. Its pathway is amino-acid biosynthesis; L-leucine biosynthesis; L-leucine from 3-methyl-2-oxobutanoate: step 2/4. Catalyzes the isomerization between 2-isopropylmalate and 3-isopropylmalate, via the formation of 2-isopropylmaleate. The chain is 3-isopropylmalate dehydratase large subunit from Clostridioides difficile (strain 630) (Peptoclostridium difficile).